A 156-amino-acid chain; its full sequence is Small ribosomal subunit protein uS7 (156 aa).

Belongs to the universal ribosomal protein uS7 family. In terms of assembly, part of the 30S ribosomal subunit. Contacts proteins S9 and S11.

Its function is as follows. One of the primary rRNA binding proteins, it binds directly to 16S rRNA where it nucleates assembly of the head domain of the 30S subunit. Is located at the subunit interface close to the decoding center, probably blocks exit of the E-site tRNA. This chain is Small ribosomal subunit protein uS7, found in Leuconostoc mesenteroides subsp. mesenteroides (strain ATCC 8293 / DSM 20343 / BCRC 11652 / CCM 1803 / JCM 6124 / NCDO 523 / NBRC 100496 / NCIMB 8023 / NCTC 12954 / NRRL B-1118 / 37Y).